Consider the following 580-residue polypeptide: MSSRNPIQLLDTITINQIAAGEVIENSISVVKELVENALDAGADEIEVETLGGGQGLIVVKDNGCGMSSEDVALALKRHATSKIGEFSDVFSLSSFGFRGEALPAIASISKMEILSCPRAGEGSRTIIHGGEIVTSEAKPRQVGTTISIDSLFYNVPVRRGFQKSPQTDRMAMRKLLENRILSVENVGWSWVSERQQEFHIFKHQGFAERVAFVMGEGFMQEALRVDKGGNLVRVVGFLGSPGFHRPTRLGQRVFINDRPVDSTFISKKISEAYSMLLPPQRYPVFVLKLYLPPEWCDFNVHPQKTEVRILREEFVGEFLSETIGEVLARPQEVSVFETASTLPALRFFDEQLPESALEGLQGSNVLPVVKLTPSSSGSLPFLDREPDPLPVDRQTQISWGASQEVRFLTSLGKIVLAEDSEGVHAIFTESARKHLFYLSLVENHQHNYKSQSFLVPLCLEVTPQERIFLSSHIEEFKLLGIEISQMGPCVFSIESAPTFIGEEELKLWILSLAAESAKVDKRAMTLLIKEALTQTIFCKTLRAFDISWLSLLWQLGKPEKAFDGSQIRRLVLDEDFIKE.

It belongs to the DNA mismatch repair MutL/HexB family.

Its function is as follows. This protein is involved in the repair of mismatches in DNA. It is required for dam-dependent methyl-directed DNA mismatch repair. May act as a 'molecular matchmaker', a protein that promotes the formation of a stable complex between two or more DNA-binding proteins in an ATP-dependent manner without itself being part of a final effector complex. The protein is DNA mismatch repair protein MutL of Chlamydia caviae (strain ATCC VR-813 / DSM 19441 / 03DC25 / GPIC) (Chlamydophila caviae).